The following is a 315-amino-acid chain: C1GALT1-specific chaperone 1-like protein (315 aa).

At 1–8 (MVSASGTS) the chain is on the cytoplasmic side. The helical; Signal-anchor for type II membrane protein transmembrane segment at 9 to 29 (FFKGMLLGSISWVLITMFGQI) threads the bilayer. At 30-315 (HIRHRGQTQD…FLPPVGSEND (286 aa)) the chain is on the lumenal side. N55 and N301 each carry an N-linked (GlcNAc...) asparagine glycan.

The protein belongs to the glycosyltransferase 31 family. Beta3-Gal-T subfamily.

It is found in the membrane. The protein is C1GALT1-specific chaperone 1-like protein of Homo sapiens (Human).